We begin with the raw amino-acid sequence, 79 residues long: Protein OPG081 (79 aa).

Residues M1 to L8 are Intravirion-facing. A helical membrane pass occupies residues T9 to V29. The Virion surface portion of the chain corresponds to K30–R47. A helical membrane pass occupies residues A48 to Y68. Residues A69–S79 lie on the Intravirion side of the membrane.

This sequence belongs to the orthopoxvirus OPG081 family.

The protein resides in the virion membrane. Functionally, envelope protein. This chain is Protein OPG081 (OPG081), found in Vaccinia virus (strain Copenhagen) (VACV).